Here is a 271-residue protein sequence, read N- to C-terminus: Tritrans,polycis-undecaprenyl-diphosphate synthase (geranylgeranyl-diphosphate specific) (271 aa).

Residue aspartate 50 is part of the active site. Aspartate 50 is a binding site for Mg(2+). Substrate is bound by residues 51–54, phenylalanine 55, histidine 67, and 95–97; these read GNRR and STE. The active-site Proton acceptor is the asparagine 98. Substrate is bound by residues arginine 101, arginine 220, and 226–228; that span reads RLS. Residue glutamate 239 coordinates Mg(2+).

The protein belongs to the UPP synthase family. As to quaternary structure, homodimer. Requires Mg(2+) as cofactor.

The enzyme catalyses geranylgeranyl diphosphate + 7 isopentenyl diphosphate = tri-trans,hepta-cis-undecaprenyl diphosphate + 7 diphosphate. Functionally, catalyzes the sequential condensation of isopentenyl diphosphate (IPP) with geranylgeranyl diphosphate (GGPP) to yield (2Z,6Z,10Z,14Z,18Z,22Z,26Z,30E,34E,38E)-undecaprenyl diphosphate (tritrans,heptacis-UPP). It is probably the precursor of glycosyl carrier lipids. This chain is Tritrans,polycis-undecaprenyl-diphosphate synthase (geranylgeranyl-diphosphate specific), found in Methanopyrus kandleri (strain AV19 / DSM 6324 / JCM 9639 / NBRC 100938).